The sequence spans 214 residues: MDFNQSFEDIESQLDNFVIRKNQQSEKSTGKCGPEVHDNVPLTISQIERATQDPENENVFITDDVHPIHFCTCIIYAFVTGNGTHNESFMKFMIDDGTGSLEASITKKPFNGRVISSLYSEASSLASSEAYKSIAVSMMRLLQVSMEYIDPTRISRGHSLFLRGRPNRFRGKMGLDAFQFFIDSGRSRNMEIGFVDYLTDWQRRHKTMQNTTNK.

As to quaternary structure, probably homomultimerizes. Component of the MTV complex, composed of moi/modigliani, tea and ver/verrocchio. Interacts with moi/modigliani and tea (via C-terminus); the interactions are direct and require fully intact moi/modigliani and ver/verrocchio. The MTV complex is recruited to telomeres by the HipHop-HOAP complex, consisting of HipHop, cav/HOAP and Su(var)205/HP1 to form the terminin telomere-capping complex. Interacts with cav/HOAP; the interaction is direct. Interacts with Su(var)205/HP1; the interaction is indirect and probably requires cav/HOAP or moi/modigliani. Probably interacts with peo (via N-terminus and UBC domain).

The protein localises to the nucleus. The protein resides in the chromosome. Its subcellular location is the telomere. Part of the MTV complex that associates with the HipHop-HOAP complex to form the terminin telomere-capping complex involved in telomere maintenance and prevention of telomere fusion. As part of the MTV complex binds single stranded DNA in a sequence-independent manner, protecting it from degradation. The chain is Protein verrocchio from Drosophila melanogaster (Fruit fly).